The following is a 131-amino-acid chain: RutC family protein YjgH (131 aa).

This sequence belongs to the RutC family.

This Escherichia coli (strain K12) protein is RutC family protein YjgH (yjgH).